A 213-amino-acid chain; its full sequence is Large ribosomal subunit protein uL3 (213 aa).

It belongs to the universal ribosomal protein uL3 family. As to quaternary structure, part of the 50S ribosomal subunit. Forms a cluster with proteins L14 and L19.

In terms of biological role, one of the primary rRNA binding proteins, it binds directly near the 3'-end of the 23S rRNA, where it nucleates assembly of the 50S subunit. This is Large ribosomal subunit protein uL3 from Petrotoga mobilis (strain DSM 10674 / SJ95).